Here is a 375-residue protein sequence, read N- to C-terminus: PqqA peptide cyclase (375 aa).

In terms of domain architecture, Radical SAM core spans 18 to 235 (ILPPMAMLAE…EAREKYQGIL (218 aa)). [4Fe-4S] cluster is bound by residues Cys32, Cys36, and Cys39.

Belongs to the radical SAM superfamily. PqqE family. Interacts with PqqD. The interaction is necessary for activity of PqqE. The cofactor is [4Fe-4S] cluster.

The catalysed reaction is [PQQ precursor protein] + S-adenosyl-L-methionine = E-Y cross-linked-[PQQ precursor protein] + 5'-deoxyadenosine + L-methionine + H(+). It functions in the pathway cofactor biosynthesis; pyrroloquinoline quinone biosynthesis. Catalyzes the cross-linking of a glutamate residue and a tyrosine residue in the PqqA protein as part of the biosynthesis of pyrroloquinoline quinone (PQQ). In Rhizobium meliloti (strain 1021) (Ensifer meliloti), this protein is PqqA peptide cyclase.